The chain runs to 526 residues: Cytochrome P450 monooxygenase ucsK (526 aa).

A helical membrane pass occupies residues 7–27 (PVLAAATAVSFGFYLAGLFVY). N-linked (GlcNAc...) asparagine glycosylation is present at N403. C467 lines the heme pocket.

The protein belongs to the cytochrome P450 family. Heme is required as a cofactor.

The protein localises to the membrane. Its pathway is mycotoxin biosynthesis. Its function is as follows. Cytochrome P450 monooxygenase; part of the gene cluster that mediates the biosynthesis of UCS1025A, a member of the pyrrolizidinone family that acts as a strong telomerase inhibitor and displays potent antibacterial and antitumor properties. These compounds share a hemiaminal-containing pyrrolizidinone core fused with a gamma-lactone, giving a furopyrrolizidine that is connected to a decalin fragment. The polyketide synthase module (PKS) of the PKS-NRPS ucsA is responsible for the synthesis of the polyketide backbone via the condensation of an acetyl-CoA starter unit with 6 malonyl-CoA units. The downstream nonribosomal peptide synthetase (NRPS) module then amidates the carboxyl end of the polyketide with a 2S,3S-methylproline derived from L-isoleucine by the 2-oxoglutarate-dependent dioxygenase ucsF which converts L-isoleucine to (4S,5S)-4-methylpyrroline-5-carboxylate that is further converted to 2S,3S-methylproline by the pyrroline-5-carboxylate reductase ucsG. Reductive release of the completed aminoacyl polyketide from the assembly line can form the 3-pyrrolin-2-one structure via an intramolecular Knoevenagel reaction. Because ucsA lacks a designated enoylreductase (ER) domain, the required activity is provided the enoyl reductase ucsL. This keto acyclic precursor is the substrate of the Diels-Alderase ucsH, that catalyzes the Diels-Alder cycloaddition. Oxidation of the 3S-methyl group to a carboxylate by the cytochrome P450 monooxygenase ucsK allows an oxa-Michael cyclization that might involve the reductase/dehydrogenase ucsI and which furnishes the furopyrrolizidine. The oxidase ucsJ likely plays a critical role in stereoselective reduction of the C5-C6 double bond to afford the required R-configured carboxylate group. Further enolization and oxidation at C5 by an unidentified enzyme affords the last intermediate that can undergo oxa-Michael cyclization to yield UCS1025A. This is Cytochrome P450 monooxygenase ucsK from Acremonium sp.